The chain runs to 68 residues: DNA-directed RNA polymerase subunit Rpo10 (68 aa).

Positions 7, 10, 44, and 45 each coordinate Zn(2+).

Belongs to the archaeal Rpo10/eukaryotic RPB10 RNA polymerase subunit family. In terms of assembly, part of the RNA polymerase complex. Requires Zn(2+) as cofactor.

It localises to the cytoplasm. The enzyme catalyses RNA(n) + a ribonucleoside 5'-triphosphate = RNA(n+1) + diphosphate. In terms of biological role, DNA-dependent RNA polymerase (RNAP) catalyzes the transcription of DNA into RNA using the four ribonucleoside triphosphates as substrates. This chain is DNA-directed RNA polymerase subunit Rpo10, found in Methanococcus maripaludis (strain DSM 14266 / JCM 13030 / NBRC 101832 / S2 / LL).